Reading from the N-terminus, the 1158-residue chain is ATP-dependent helicase/deoxyribonuclease subunit B (1158 aa).

A UvrD-like helicase ATP-binding domain is found at Met-1–Asn-275. Residue Gly-8 to Ser-15 coordinates ATP. The region spanning Asn-269 to Val-583 is the UvrD-like helicase C-terminal domain. Residues Cys-784, Cys-1112, Cys-1115, and Cys-1121 each contribute to the [4Fe-4S] cluster site.

It belongs to the helicase family. AddB/RexB type 1 subfamily. Heterodimer of AddA and AddB. Mg(2+) is required as a cofactor. [4Fe-4S] cluster serves as cofactor.

Its function is as follows. The heterodimer acts as both an ATP-dependent DNA helicase and an ATP-dependent, dual-direction single-stranded exonuclease. Recognizes the chi site generating a DNA molecule suitable for the initiation of homologous recombination. The AddB subunit has 5' -&gt; 3' nuclease activity but not helicase activity. The polypeptide is ATP-dependent helicase/deoxyribonuclease subunit B (Staphylococcus aureus (strain MW2)).